We begin with the raw amino-acid sequence, 145 residues long: Aspartate 1-decarboxylase (145 aa).

Catalysis depends on serine 26, which acts as the Schiff-base intermediate with substrate; via pyruvic acid. A Pyruvic acid (Ser) modification is found at serine 26. A substrate-binding site is contributed by threonine 58. Catalysis depends on tyrosine 59, which acts as the Proton donor. 74–76 (GGA) contacts substrate.

The protein belongs to the PanD family. In terms of assembly, heterooctamer of four alpha and four beta subunits. The cofactor is pyruvate. Post-translationally, is synthesized initially as an inactive proenzyme, which is activated by self-cleavage at a specific serine bond to produce a beta-subunit with a hydroxyl group at its C-terminus and an alpha-subunit with a pyruvoyl group at its N-terminus.

It localises to the cytoplasm. It carries out the reaction L-aspartate + H(+) = beta-alanine + CO2. It functions in the pathway cofactor biosynthesis; (R)-pantothenate biosynthesis; beta-alanine from L-aspartate: step 1/1. Functionally, catalyzes the pyruvoyl-dependent decarboxylation of aspartate to produce beta-alanine. The chain is Aspartate 1-decarboxylase from Synechocystis sp. (strain ATCC 27184 / PCC 6803 / Kazusa).